Reading from the N-terminus, the 785-residue chain is Altered inheritance of mitochondria protein 3-2 (785 aa).

3 disordered regions span residues 33–122 (TGYQ…QPYM), 142–406 (QQVA…SENL), and 418–785 (NVDV…RLHK). Low complexity predominate over residues 91-102 (GSSGNSANGSSA). Polar residues-rich tracts occupy residues 103–122 (TIPTLSNTNNTAQLNEQPYM) and 143–199 (QVAT…QLNI). Residues 249–260 (KPYDWEEQKTTK) are compositionally biased toward basic and acidic residues. Polar residues-rich tracts occupy residues 283-310 (SRQGSNSTPPSRTHTGNNTSTASVTTTG), 350-366 (ATNNSSDLKLSGAQNTK), 375-388 (TNKSAERPNSSNVM), 395-405 (QMNTKANSSEN), and 455-465 (SSISRDNYNSI). A compositionally biased stretch (basic and acidic residues) spans 478-497 (NTGEREGAQELKADIAERSQ). The segment covering 527–556 (AQTSSDIPQKSSLVTDESNISVPNKSQQPM) has biased composition (polar residues). Basic and acidic residues-rich tracts occupy residues 587–613 (KSLEESHTPSNKLSEKPKPPKKPEQLK) and 624–637 (KNMKNKDQLFDNKN). A compositionally biased stretch (polar residues) spans 659-671 (SLTSEGNHMNLNT). Basic and acidic residues-rich tracts occupy residues 672-686 (EKGKETTIEKPDESK) and 700-710 (FKREELSKEVV).

This sequence belongs to the AIM3 family.

The protein resides in the membrane raft. The polypeptide is Altered inheritance of mitochondria protein 3-2 (AIM3-2) (Candida glabrata (strain ATCC 2001 / BCRC 20586 / JCM 3761 / NBRC 0622 / NRRL Y-65 / CBS 138) (Yeast)).